The sequence spans 180 residues: MPKPTKGPRLGGSSSHQKAILANLATSLFEHGRITTTEPKARALRPYAEKLITHAKKGALHNRREVLKKLRDKDVVHTLFAEIGPFFADRDGGYTRIIKIEARKGDNAPMAVIELVREKTVTSEANRARRVAAAQAKAKKAAAMPTEESEAKPAEEGDVVGASEPDAKAPEEPPAEAPEN.

Residues 134–180 are disordered; that stretch reads AQAKAKKAAAMPTEESEAKPAEEGDVVGASEPDAKAPEEPPAEAPEN.

Belongs to the bacterial ribosomal protein bL17 family. In terms of assembly, part of the 50S ribosomal subunit. Contacts protein L32.

This chain is Large ribosomal subunit protein bL17, found in Mycobacterium tuberculosis (strain ATCC 25177 / H37Ra).